The chain runs to 150 residues: MTTEQTTMNITEIQELLPHRYPFLMVDRVTSFEKEKTLTAIKNVSVNEPQFTGHFPQLPVFPGVLILEAMAQATGLLAFKSFGAPSGNELYYFASVDKAKFRKPVVPGDQLVIEVEFLKERRGIASFNGVAKVDGVVVCSAELKCARREF.

His54 is an active-site residue.

This sequence belongs to the thioester dehydratase family. FabZ subfamily.

The protein localises to the cytoplasm. It carries out the reaction a (3R)-hydroxyacyl-[ACP] = a (2E)-enoyl-[ACP] + H2O. Its function is as follows. Involved in unsaturated fatty acids biosynthesis. Catalyzes the dehydration of short chain beta-hydroxyacyl-ACPs and long chain saturated and unsaturated beta-hydroxyacyl-ACPs. The polypeptide is 3-hydroxyacyl-[acyl-carrier-protein] dehydratase FabZ (Vibrio atlanticus (strain LGP32) (Vibrio splendidus (strain Mel32))).